We begin with the raw amino-acid sequence, 435 residues long: tRNA modification GTPase MnmE (435 aa).

Residues R24, E82, and K122 each contribute to the (6S)-5-formyl-5,6,7,8-tetrahydrofolate site. The TrmE-type G domain maps to 219–360 (GFIIAIAGPP…LIAEMERRLG (142 aa)). N229 is a binding site for K(+). Residues 229 to 234 (NAGKST), 248 to 254 (SPVPGTT), and 273 to 276 (DTAG) contribute to the GTP site. Mg(2+) is bound at residue S233. 3 residues coordinate K(+): S248, V250, and T253. Position 254 (T254) interacts with Mg(2+). Position 435 (K435) interacts with (6S)-5-formyl-5,6,7,8-tetrahydrofolate.

This sequence belongs to the TRAFAC class TrmE-Era-EngA-EngB-Septin-like GTPase superfamily. TrmE GTPase family. Homodimer. Heterotetramer of two MnmE and two MnmG subunits. It depends on K(+) as a cofactor.

Its subcellular location is the cytoplasm. Exhibits a very high intrinsic GTPase hydrolysis rate. Involved in the addition of a carboxymethylaminomethyl (cmnm) group at the wobble position (U34) of certain tRNAs, forming tRNA-cmnm(5)s(2)U34. The polypeptide is tRNA modification GTPase MnmE (Azorhizobium caulinodans (strain ATCC 43989 / DSM 5975 / JCM 20966 / LMG 6465 / NBRC 14845 / NCIMB 13405 / ORS 571)).